Here is a 521-residue protein sequence, read N- to C-terminus: 4-cresol dehydrogenase [hydroxylating] flavoprotein subunit (521 aa).

Residues 54 to 268 form the FAD-binding PCMH-type domain; it reads AAHAPSAAVT…VEIVDALRPL (215 aa). Position 384 is an O-8alpha-FAD tyrosine (Tyr-384).

As to quaternary structure, tetramer of two cytochrome subunits and two flavoprotein subunits. It depends on FAD as a cofactor.

It carries out the reaction 4-methylphenol + 4 oxidized [azurin] + H2O = 4 reduced [azurin] + 4-hydroxybenzaldehyde + 4 H(+). It functions in the pathway aromatic compound metabolism; p-cresol degradation. Catalyzes the azurin dependent hydroxylation of the methyl group of 4-methylphenol to form 4-hydroxybenzaldehyde. The sequence is that of 4-cresol dehydrogenase [hydroxylating] flavoprotein subunit (pchF) from Pseudomonas putida (Arthrobacter siderocapsulatus).